Here is a 515-residue protein sequence, read N- to C-terminus: Bifunctional purine biosynthesis protein PurH (515 aa).

An MGS-like domain is found at 1–145 (MTKRALISVS…KNHASVTVVV (145 aa)).

It belongs to the PurH family.

It carries out the reaction (6R)-10-formyltetrahydrofolate + 5-amino-1-(5-phospho-beta-D-ribosyl)imidazole-4-carboxamide = 5-formamido-1-(5-phospho-D-ribosyl)imidazole-4-carboxamide + (6S)-5,6,7,8-tetrahydrofolate. The catalysed reaction is IMP + H2O = 5-formamido-1-(5-phospho-D-ribosyl)imidazole-4-carboxamide. It functions in the pathway purine metabolism; IMP biosynthesis via de novo pathway; 5-formamido-1-(5-phospho-D-ribosyl)imidazole-4-carboxamide from 5-amino-1-(5-phospho-D-ribosyl)imidazole-4-carboxamide (10-formyl THF route): step 1/1. Its pathway is purine metabolism; IMP biosynthesis via de novo pathway; IMP from 5-formamido-1-(5-phospho-D-ribosyl)imidazole-4-carboxamide: step 1/1. This is Bifunctional purine biosynthesis protein PurH from Streptococcus equi subsp. equi (strain 4047).